Consider the following 362-residue polypeptide: S-adenosylmethionine decarboxylase proenzyme (362 aa).

Active-site residues include Glu11 and Glu14. Ser71 (schiff-base intermediate with substrate; via pyruvic acid) is an active-site residue. A Pyruvic acid (Ser); by autocatalysis modification is found at Ser71. Cys85 functions as the Proton donor; for catalytic activity in the catalytic mechanism. Catalysis depends on proton acceptor; for processing activity residues Ser234 and His247.

The protein belongs to the eukaryotic AdoMetDC family. Pyruvate is required as a cofactor. In terms of processing, is synthesized initially as an inactive proenzyme. Formation of the active enzyme involves a self-maturation process in which the active site pyruvoyl group is generated from an internal serine residue via an autocatalytic post-translational modification. Two non-identical subunits are generated from the proenzyme in this reaction, and the pyruvate is formed at the N-terminus of the alpha chain, which is derived from the carboxyl end of the proenzyme. The post-translation cleavage follows an unusual pathway, termed non-hydrolytic serinolysis, in which the side chain hydroxyl group of the serine supplies its oxygen atom to form the C-terminus of the beta chain, while the remainder of the serine residue undergoes an oxidative deamination to produce ammonia and the pyruvoyl group blocking the N-terminus of the alpha chain.

It catalyses the reaction S-adenosyl-L-methionine + H(+) = S-adenosyl 3-(methylsulfanyl)propylamine + CO2. It participates in amine and polyamine biosynthesis; S-adenosylmethioninamine biosynthesis; S-adenosylmethioninamine from S-adenosyl-L-methionine: step 1/1. This Ipomoea batatas (Sweet potato) protein is S-adenosylmethionine decarboxylase proenzyme (SAMDC).